Here is a 101-residue protein sequence, read N- to C-terminus: Small ribosomal subunit protein uS14 (101 aa).

It belongs to the universal ribosomal protein uS14 family. Part of the 30S ribosomal subunit. Contacts proteins S3 and S10.

In terms of biological role, binds 16S rRNA, required for the assembly of 30S particles and may also be responsible for determining the conformation of the 16S rRNA at the A site. This Corynebacterium efficiens (strain DSM 44549 / YS-314 / AJ 12310 / JCM 11189 / NBRC 100395) protein is Small ribosomal subunit protein uS14.